A 165-amino-acid polypeptide reads, in one-letter code: Nascent polypeptide-associated complex subunit beta (165 aa).

2 disordered regions span residues 1–34 and 133–165; these read MDQA…TSGA and QNMQ…KSVD. Residues 20–30 are compositionally biased toward basic residues; it reads TPRRKVKKVHK. The region spanning 33 to 110 is the NAC-A/B domain; that stretch reads GADDKKLQAT…GEEKELTELV (78 aa). Over residues 145-158 the composition is skewed to acidic residues; it reads DDDEDDIPDLVEGE.

The protein belongs to the NAC-beta family. As to quaternary structure, part of the nascent polypeptide-associated complex (NAC), consisting of egd2 and egd1. NAC associates with ribosomes via egd1.

The protein resides in the cytoplasm. Its subcellular location is the nucleus. In terms of biological role, component of the nascent polypeptide-associated complex (NAC), a dynamic component of the ribosomal exit tunnel, protecting the emerging polypeptides from interaction with other cytoplasmic proteins to ensure appropriate nascent protein targeting. The NAC complex also promotes mitochondrial protein import by enhancing productive ribosome interactions with the outer mitochondrial membrane and blocks the inappropriate interaction of ribosomes translating non-secretory nascent polypeptides with translocation sites in the membrane of the endoplasmic reticulum. EGD1 may act as a transcription factor that exert a negative effect on the expression of several genes that are transcribed by RNA polymerase II. The sequence is that of Nascent polypeptide-associated complex subunit beta (egd1) from Emericella nidulans (strain FGSC A4 / ATCC 38163 / CBS 112.46 / NRRL 194 / M139) (Aspergillus nidulans).